The chain runs to 332 residues: Ectoine dioxygenase (332 aa).

Residues 1–10 (MSVQTSSNRP) are compositionally biased toward polar residues. The segment at 1 to 47 (MSVQTSSNRPLPQANLHIATETPEADSRIRSAPRPGQDPYPTRLSEP) is disordered. Q163 provides a ligand contact to L-ectoine. K169 is a 2-oxoglutarate binding site. Residues H180, D182, and H281 each coordinate Fe cation.

Belongs to the PhyH family. EctD subfamily. As to quaternary structure, homodimer. Requires Fe(2+) as cofactor.

The enzyme catalyses L-ectoine + 2-oxoglutarate + O2 = 5-hydroxyectoine + succinate + CO2. In terms of biological role, involved in the biosynthesis of 5-hydroxyectoine, called compatible solute, which helps organisms to survive extreme osmotic stress by acting as a highly soluble organic osmolyte. Catalyzes the 2-oxoglutarate-dependent selective hydroxylation of L-ectoine to yield (4S,5S)-5-hydroxyectoine. The chain is Ectoine dioxygenase from Halomonas elongata (strain ATCC 33173 / DSM 2581 / NBRC 15536 / NCIMB 2198 / 1H9).